The chain runs to 258 residues: Regulatory protein RecX (258 aa).

This sequence belongs to the RecX family.

The protein resides in the cytoplasm. Its function is as follows. Modulates RecA activity. The sequence is that of Regulatory protein RecX from Streptococcus mutans serotype c (strain ATCC 700610 / UA159).